The chain runs to 255 residues: Imidazole glycerol phosphate synthase subunit HisF (255 aa).

Active-site residues include D11 and D130.

This sequence belongs to the HisA/HisF family. As to quaternary structure, heterodimer of HisH and HisF.

The protein localises to the cytoplasm. It catalyses the reaction 5-[(5-phospho-1-deoxy-D-ribulos-1-ylimino)methylamino]-1-(5-phospho-beta-D-ribosyl)imidazole-4-carboxamide + L-glutamine = D-erythro-1-(imidazol-4-yl)glycerol 3-phosphate + 5-amino-1-(5-phospho-beta-D-ribosyl)imidazole-4-carboxamide + L-glutamate + H(+). The protein operates within amino-acid biosynthesis; L-histidine biosynthesis; L-histidine from 5-phospho-alpha-D-ribose 1-diphosphate: step 5/9. Functionally, IGPS catalyzes the conversion of PRFAR and glutamine to IGP, AICAR and glutamate. The HisF subunit catalyzes the cyclization activity that produces IGP and AICAR from PRFAR using the ammonia provided by the HisH subunit. The protein is Imidazole glycerol phosphate synthase subunit HisF of Maricaulis maris (strain MCS10) (Caulobacter maris).